The sequence spans 762 residues: MAVVAAAAATGSTTRSGGGGGEGTRSGRKKPPPPPLQERVPLGRRAAWAWRLAGLAVLLLLLALLALRLLRHHGGAGGDAGVWRVALVCEAWFAALCALNVSAKWSPVRFVTRPENLVAEGRTPSTTAAEYGELPAVDMLVTTADPALEPPLVTVNTVLSLLALDYPRAGERLACYVSDDGCSPLTCHALREAAGFAAAWVPFCRRYGVAVRAPFRYFSSSSSPESGGPADRKFLDDWTFMKDEYDKLVRRIKNTDERSLLRHGGGEFFAEFLNVERRNHPTIVKTRVSAVMTNAPIMLNMDCDMFVNNPQAVLHAMCLLLGFDDEASSGFVQAPQRFYDALKDDPFGNQMECFFKRFISGVQGVQGAFYAGTGCFHRRKAVYGVPPNFNGAEREDTIGSSSYKELHTRFGNSEELNESARNIIWDLSSKPMVDISSRIEVAKAVSACNYDIGTCWGQEVGWVYGSLTEDILTGQRIHAMGWRSVLMVTEPPAFMGSAPIGGPACLTQFKRWATGQSEIIISRNNPILATMFKRLKFRQCLAYLIVLGWPLRAPFELCYGLLGPYCILTNQSFLPKASEDGFSVPLALFISYNTYNFMEYMACGLSARAWWNNHRMQRIISVSAWTLAFLTVLLKSLGLSETVFEVTGKDKSMSDDDDNTDGADPGRFTFDSLPVFIPVTALAMLNIVAVTVGACRVAFGTAEGVPCAPGIGEFMCCGWLVLCFFPFVRGIVWGKGSYGIPWSVKLKASLLVAMFVTFCKRN.

A compositionally biased stretch (low complexity) spans 1–15 (MAVVAAAAATGSTTR). Residues 1–39 (MAVVAAAAATGSTTRSGGGGGEGTRSGRKKPPPPPLQER) form a disordered region. 2 consecutive transmembrane segments (helical) span residues 47 to 67 (AWAW…LLAL) and 81 to 101 (GVWR…ALNV). Residues Asp180 and Asp470 contribute to the active site. 6 consecutive transmembrane segments (helical) span residues 541–561 (LAYL…CYGL), 582–602 (FSVP…EYMA), 619–639 (IISV…SLGL), 673–693 (LPVF…VTVG), 708–728 (APGI…FPFV), and 739–759 (GIPW…VTFC).

This sequence belongs to the glycosyltransferase 2 family. Plant cellulose synthase-like H subfamily.

The protein resides in the golgi apparatus membrane. In terms of biological role, thought to be a Golgi-localized beta-glycan synthase that polymerize the backbones of noncellulosic polysaccharides (hemicelluloses) of plant cell wall. This is Cellulose synthase-like protein H2 (CSLH2) from Oryza sativa subsp. indica (Rice).